A 325-amino-acid chain; its full sequence is Bifunctional nuclease 2 (325 aa).

A BFN domain is found at 119–254 (CVHNNSQGRN…SLAYSDGIRS (136 aa)). Residues 285-320 (EAQEFGLIRNMLIAAVEERYKDAATWRDKLMLLRSK) form the UVR domain.

Belongs to the bifunctional nuclease family.

The protein resides in the nucleus. Bifunctional nuclease with both RNase and DNase activities. Involved in basal defense response. Participates in abscisic acid-derived callose deposition following infection by a necrotrophic pathogen. This chain is Bifunctional nuclease 2 (BBD2), found in Oryza sativa subsp. japonica (Rice).